The primary structure comprises 205 residues: Large ribosomal subunit protein uL4 (205 aa).

Residues Arg-53–Ile-77 are disordered. Over residues Gly-59–Gly-70 the composition is skewed to basic residues.

It belongs to the universal ribosomal protein uL4 family. Part of the 50S ribosomal subunit.

In terms of biological role, one of the primary rRNA binding proteins, this protein initially binds near the 5'-end of the 23S rRNA. It is important during the early stages of 50S assembly. It makes multiple contacts with different domains of the 23S rRNA in the assembled 50S subunit and ribosome. Its function is as follows. Forms part of the polypeptide exit tunnel. The protein is Large ribosomal subunit protein uL4 of Acidithiobacillus ferrooxidans (strain ATCC 23270 / DSM 14882 / CIP 104768 / NCIMB 8455) (Ferrobacillus ferrooxidans (strain ATCC 23270)).